Reading from the N-terminus, the 354-residue chain is Ion-translocating oxidoreductase complex subunit D (354 aa).

4 helical membrane-spanning segments follow: residues 19–39 (IMLL…YYFG), 40–60 (FGVL…EFLV), 77–99 (AAVT…LSFF), and 119–139 (IFNP…ILMT). Threonine 187 carries the FMN phosphoryl threonine modification. A run of 5 helical transmembrane segments spans residues 221–241 (WISI…FNVI), 245–265 (IPVS…YFFK), 268–288 (MYYP…FFIA), 295–315 (SITK…IWLI), and 319–339 (GNYP…VPLI).

Belongs to the NqrB/RnfD family. In terms of assembly, the complex is composed of six subunits: RnfA, RnfB, RnfC, RnfD, RnfE and RnfG. FMN serves as cofactor.

Its subcellular location is the cell inner membrane. Part of a membrane-bound complex that couples electron transfer with translocation of ions across the membrane. This is Ion-translocating oxidoreductase complex subunit D from Buchnera aphidicola subsp. Baizongia pistaciae (strain Bp).